A 321-amino-acid polypeptide reads, in one-letter code: Probable cell division protein WhiA (321 aa).

The segment at residues 276–309 is a DNA-binding region (H-T-H motif); the sequence is NLKELGELLEPPVGKSGVNHRLRKLEKIAEQLHQ.

It belongs to the WhiA family.

Functionally, involved in cell division and chromosome segregation. This is Probable cell division protein WhiA from Natranaerobius thermophilus (strain ATCC BAA-1301 / DSM 18059 / JW/NM-WN-LF).